Consider the following 92-residue polypeptide: Conotoxin Mr15.3 (92 aa).

Residues 1-20 (MSTLKMMLLILLLLLPMATF) form the signal peptide. A propeptide spanning residues 21 to 53 (DSDGQAIPGGGIPSAVNSRVRGDEKSGRSLEKR) is cleaved from the precursor.

Belongs to the conotoxin N superfamily. Post-translationally, contains 4 disulfide bonds. Expressed by the venom duct.

It localises to the secreted. The sequence is that of Conotoxin Mr15.3 from Conus marmoreus (Marble cone).